A 359-amino-acid polypeptide reads, in one-letter code: 4-hydroxy-3-methylbut-2-en-1-yl diphosphate synthase (flavodoxin) (359 aa).

[4Fe-4S] cluster-binding residues include Cys-264, Cys-267, Cys-299, and Glu-306.

This sequence belongs to the IspG family. [4Fe-4S] cluster serves as cofactor.

The enzyme catalyses (2E)-4-hydroxy-3-methylbut-2-enyl diphosphate + oxidized [flavodoxin] + H2O + 2 H(+) = 2-C-methyl-D-erythritol 2,4-cyclic diphosphate + reduced [flavodoxin]. It functions in the pathway isoprenoid biosynthesis; isopentenyl diphosphate biosynthesis via DXP pathway; isopentenyl diphosphate from 1-deoxy-D-xylulose 5-phosphate: step 5/6. Converts 2C-methyl-D-erythritol 2,4-cyclodiphosphate (ME-2,4cPP) into 1-hydroxy-2-methyl-2-(E)-butenyl 4-diphosphate. This is 4-hydroxy-3-methylbut-2-en-1-yl diphosphate synthase (flavodoxin) from Helicobacter pylori (strain ATCC 700392 / 26695) (Campylobacter pylori).